Consider the following 342-residue polypeptide: L-lysine 2,3-aminomutase (342 aa).

In terms of domain architecture, Radical SAM core spans 106-329 (HKYHNRALLL…PKLAREIGGE (224 aa)). Positions 120, 124, and 127 each coordinate [4Fe-4S] cluster. Lysine 332 carries the N6-(pyridoxal phosphate)lysine modification.

This sequence belongs to the radical SAM superfamily. KamA family. [4Fe-4S] cluster serves as cofactor. The cofactor is pyridoxal 5'-phosphate.

It carries out the reaction L-lysine = D-beta-lysine. Its function is as follows. With EpmA is involved in the beta-lysylation step of the post-translational modification of translation elongation factor P (EF-P) on 'Lys-34'. EpmB appears to act before EpmA. Displays lysine 2,3-aminomutase activity, producing (R)-beta-lysine from (S)-alpha-lysine (L-lysine). Cannot use (S)-ornithine or (R)-alpha-lysine as a substrate. The polypeptide is L-lysine 2,3-aminomutase (epmB) (Escherichia coli (strain K12)).